The primary structure comprises 616 residues: Sodium- and chloride-dependent transporter XTRP3 (616 aa).

Basic residues predominate over residues 1-11 (MRLAIKRRASR). Residues 1–26 (MRLAIKRRASRGQRPGPDEKRARDME) form a disordered region. The Cytoplasmic segment spans residues 1-37 (MRLAIKRRASRGQRPGPDEKRARDMEKARPQWGNPLQ). A compositionally biased stretch (basic and acidic residues) spans 16 to 26 (GPDEKRARDME). The chain crosses the membrane as a helical span at residues 38-58 (FVFACISYAVGLGNVWRFPYL). At 59-66 (CQMYGGGS) the chain is on the extracellular side. A helical transmembrane segment spans residues 67–87 (FLVPYLIMLIVEGMPLLYLEL). Residues 88–103 (AVGQRMRQGSIGAWRT) are Cytoplasmic-facing. Residues 104 to 124 (ISPYLSGVGVASVVVSFFLSM) form a helical membrane-spanning segment. At 125-189 (YYNVINAWGF…ISPSIQENGG (65 aa)) the chain is on the extracellular side. N-linked (GlcNAc...) asparagine glycosylation is present at N155. Residues 190 to 210 (VQWEPALCLTLAWLMVYLCIL) traverse the membrane as a helical segment. Over 211 to 218 (RGTESTGK) the chain is Cytoplasmic. The helical transmembrane segment at 219–239 (VVYFTALMPYCVLIIYLVRGL) threads the bilayer. Topologically, residues 240–265 (TLHGATNGLMYMFTPKIEQLANPKAW) are extracellular. Residues 266-286 (INAATQIFFSLGLGFGSLIAF) traverse the membrane as a helical segment. At 287-300 (ASYNEPSNDCQKHA) the chain is on the cytoplasmic side. A helical membrane pass occupies residues 301–321 (VIVSVINSSTSIFASIVTFSI). Residues 322–413 (YGFKATFNYE…EAIKNMEVSQ (92 aa)) are Extracellular-facing. N381 carries N-linked (GlcNAc...) asparagine glycosylation. The chain crosses the membrane as a helical span at residues 414 to 434 (LWSVLYFFMLLMLGMGSMLGN). Residues 435–455 (TAAILTPLTDSKVISSYLPKE) are Cytoplasmic-facing. A helical membrane pass occupies residues 456–476 (AISGLVCLINCAVGMVFTMEA). Residues 477–489 (GNYWFDIFNDYAA) lie on the Extracellular side of the membrane. A helical transmembrane segment spans residues 490–510 (TLSLLLIVLVETIAVCYVYGL). The Cytoplasmic segment spans residues 511 to 533 (RRFESDLRAMTGRPLNWYWKAMW). Residues 534–554 (AFVSPLLIIGLFIFYLSDYIL) form a helical membrane-spanning segment. Topologically, residues 555–578 (TGTLQYQAWDATQGQLVTKDYPPH) are extracellular. The helical transmembrane segment at 579-599 (ALAVIGLLVASSTMCIPLVAL) threads the bilayer. Residues 600-616 (GTFIRNRLKRGGSSPVA) are Cytoplasmic-facing.

This sequence belongs to the sodium:neurotransmitter symporter (SNF) (TC 2.A.22) family. SLC6A20 subfamily. In terms of tissue distribution, highly expressed in epithelial cells of duodenum, jejunum, ileum, stomach, cecum, colon and kidney proximal tubule. Also expressed in the choroid plexus, microglia and meniges of the brain and in the ovary.

It is found in the apical cell membrane. It catalyses the reaction L-proline(out) + chloride(out) + 2 Na(+)(out) = L-proline(in) + chloride(in) + 2 Na(+)(in). The enzyme catalyses 4-hydroxy-L-proline(out) + chloride(out) + 2 Na(+)(out) = 4-hydroxy-L-proline(in) + chloride(in) + 2 Na(+)(in). The catalysed reaction is 2-methyl-2-(methylamino)propanoate(out) + chloride(out) + 2 Na(+)(out) = 2-methyl-2-(methylamino)propanoate(in) + chloride(in) + 2 Na(+)(in). It carries out the reaction L-pipecolate(out) + chloride(out) + 2 Na(+)(out) = L-pipecolate(in) + chloride(in) + 2 Na(+)(in). It catalyses the reaction glycine betaine(out) + chloride(out) + 2 Na(+)(out) = glycine betaine(in) + chloride(in) + 2 Na(+)(in). The enzyme catalyses glycine(out) + chloride(out) + 2 Na(+)(out) = glycine(in) + chloride(in) + 2 Na(+)(in). Functionally, mediates the Na(+)- and Cl(-)-dependent uptake of imino acids such as L-proline, N-methyl-L-proline and pipecolate as well as N-methylated amino acids. Also transports glycine, regulates proline and glycine homeostasis in the brain playing a role in the modulation of NMDAR currents. This Rattus norvegicus (Rat) protein is Sodium- and chloride-dependent transporter XTRP3.